We begin with the raw amino-acid sequence, 303 residues long: Protoheme IX farnesyltransferase (303 aa).

A run of 9 helical transmembrane segments spans residues 26-46 (VVAL…PGMV), 48-68 (IDIL…AAAV), 98-118 (AILF…VWVN), 120-140 (LTAW…TFWL), 148-168 (IVIG…AVTG), 174-194 (ALLL…ALAV), 221-241 (ILLY…THML), 244-264 (LYLL…VAMM), and 278-298 (YSIV…YLLP).

Belongs to the UbiA prenyltransferase family. Protoheme IX farnesyltransferase subfamily.

It is found in the cell inner membrane. The enzyme catalyses heme b + (2E,6E)-farnesyl diphosphate + H2O = Fe(II)-heme o + diphosphate. The protein operates within porphyrin-containing compound metabolism; heme O biosynthesis; heme O from protoheme: step 1/1. Functionally, converts heme B (protoheme IX) to heme O by substitution of the vinyl group on carbon 2 of heme B porphyrin ring with a hydroxyethyl farnesyl side group. In Saccharophagus degradans (strain 2-40 / ATCC 43961 / DSM 17024), this protein is Protoheme IX farnesyltransferase.